A 213-amino-acid chain; its full sequence is Large ribosomal subunit protein uL4 (213 aa).

The interval 41–75 (GTASTKTRAEVSRSGKKMYSQKGTGNARHGDRSVP) is disordered.

It belongs to the universal ribosomal protein uL4 family. Part of the 50S ribosomal subunit.

In terms of biological role, one of the primary rRNA binding proteins, this protein initially binds near the 5'-end of the 23S rRNA. It is important during the early stages of 50S assembly. It makes multiple contacts with different domains of the 23S rRNA in the assembled 50S subunit and ribosome. Its function is as follows. Forms part of the polypeptide exit tunnel. This Deinococcus geothermalis (strain DSM 11300 / CIP 105573 / AG-3a) protein is Large ribosomal subunit protein uL4.